A 215-amino-acid chain; its full sequence is Protein GET1 (215 aa).

At 1 to 4 (MINL) the chain is on the lumenal side. Residues 5–24 (ALVIFLCTLLNQIVSWVGKS) form a helical membrane-spanning segment. Residues 25–108 (VLQEIAFTAY…SFSKKFSTLL (84 aa)) lie on the Cytoplasmic side of the membrane. Positions 73–94 (AKLRRKLDKGLADLEKTNNTLS) form a coiled coil. A helical transmembrane segment spans residues 109–129 (WLMTTGAQFLLSWWFRKQPIF). At 130–153 (WLPEGWVPYPVAWLLSFPSAPIGS) the chain is on the lumenal side. The helical transmembrane segment at 154-170 (VSSGAWGAICRRVLSTL) threads the bilayer. Over 171 to 215 (QEIIQSLLAPSPAATGPVPTGPSSAKNDQPEAKIEALALEHEKLD) the chain is Cytoplasmic. Positions 182–202 (PAATGPVPTGPSSAKNDQPEA) are disordered.

The protein belongs to the WRB/GET1 family. As to quaternary structure, interacts with GET3.

Its subcellular location is the endoplasmic reticulum membrane. Required for the post-translational delivery of tail-anchored (TA) proteins to the endoplasmic reticulum. Acts as a membrane receptor for soluble GET3, which recognizes and selectively binds the transmembrane domain of TA proteins in the cytosol. The protein is Protein GET1 of Cryptococcus neoformans var. neoformans serotype D (strain JEC21 / ATCC MYA-565) (Filobasidiella neoformans).